Here is a 366-residue protein sequence, read N- to C-terminus: Galactoside alpha-(1,2)-fucosyltransferase 1 (366 aa).

Residues 1–8 (MWPLSHRH) are Cytoplasmic-facing. Residues 9–25 (LCLAFLLVCVLSAISFF) form a helical; Signal-anchor for type II membrane protein membrane-spanning segment. The Lumenal portion of the chain corresponds to 26–366 (LHIHQDSFRH…LSPLWTLAEP (341 aa)). Residues Asn66, Asn302, and Asn328 are each glycosylated (N-linked (GlcNAc...) asparagine).

It belongs to the glycosyltransferase 11 family.

The protein localises to the golgi apparatus. Its subcellular location is the golgi stack membrane. It carries out the reaction a beta-D-galactosyl-(1-&gt;4)-N-acetyl-beta-D-glucosaminyl derivative + GDP-beta-L-fucose = an alpha-L-Fuc-(1-&gt;2)-beta-D-Gal-(1-&gt;4)-beta-D-GlcNAc derivative + GDP + H(+). It catalyses the reaction a ganglioside GA1 + GDP-beta-L-fucose = a ganglioside Fuc-GA1 + GDP + H(+). The enzyme catalyses a beta-D-Gal-(1-&gt;3)-beta-D-GlcNAc-(1-&gt;3)-beta-D-Gal-(1-&gt;4)-beta-D-Glc-(1&lt;-&gt;1')-Cer(d18:1(4E)) + GDP-beta-L-fucose = alpha-L-fucosyl-(1-&gt;2)- beta-D-galactosyl-(1-&gt;3)-N-acetyl-beta-D-glucosaminyl-(1-&gt;3)-beta-D-galactosyl-(1-&gt;4)-beta-D-glucosyl-(1&lt;-&gt;1')-N-acylsphing-4-enine + GDP + H(+). The catalysed reaction is a neolactoside nLc4Cer(d18:1(4E)) + GDP-beta-L-fucose = a neolactoside IV(2)-alpha-Fuc-nLc4Cer(d18:1(4E)) + GDP + H(+). It carries out the reaction a ganglioside GM1 + GDP-beta-L-fucose = a ganglioside Fuc-GM1 + GDP + H(+). It catalyses the reaction beta-D-galactosyl-(1-&gt;3)-N-acetyl-D-galactosamine + GDP-beta-L-fucose = alpha-L-fucosyl-(1-&gt;2)-beta-D-galactosyl-(1-&gt;3)-N-acetyl-D-galactosamine + GDP + H(+). It participates in protein modification; protein glycosylation. In terms of biological role, catalyzes the transfer of L-fucose, from a guanosine diphosphate-beta-L-fucose, to the terminal galactose residue of glycoconjugates through an alpha(1,2) linkage leading to H antigen synthesis that is an intermediate substrate in the synthesis of ABO blood group antigens. H antigen is essential for maturation of the glomerular layer of the main olfactory bulb, in cell migration and early cell-cell contacts during tumor associated angiogenesis. Preferentially fucosylates soluble lactose and to a lesser extent fucosylates glycolipids gangliosides GA1 and GM1a. The polypeptide is Galactoside alpha-(1,2)-fucosyltransferase 1 (Plecturocebus brunneus (Brown titi monkey)).